Consider the following 97-residue polypeptide: ESAT-6-like protein EsxG (97 aa).

The residue at position 2 (S2) is an N-acetylserine.

This sequence belongs to the WXG100 family. CFP-10 subfamily. In terms of assembly, forms a tight 1:1 complex with EsxH.

Its subcellular location is the secreted. Functionally, esxG, in complex with EsxH, disrupts ESCRT function and impairs host phagosome maturation, thereby promoting intracellular bacterial growth. The complex acts by interacting, via EsxH, with the host hepatocyte growth factor-regulated tyrosine kinase substrate (HGS/HRS), a component of the ESCRT machinery. EsxG stabilizes EsxH in the host cytosol. This Mycobacterium tuberculosis (strain ATCC 25618 / H37Rv) protein is ESAT-6-like protein EsxG.